The following is a 170-amino-acid chain: Acetyl-CoA decarbonylase/synthase complex subunit epsilon 1 (170 aa).

Belongs to the CdhB family. In terms of assembly, heterotetramer of two alpha and two epsilon subunits. The ACDS complex is made up of alpha, epsilon, beta, gamma and delta subunits with a probable stoichiometry of (alpha(2)epsilon(2))(4)-beta(8)-(gamma(1)delta(1))(8).

The protein operates within one-carbon metabolism; methanogenesis from acetate. Part of a complex that catalyzes the reversible cleavage of acetyl-CoA, allowing growth on acetate as sole source of carbon and energy. The alpha-epsilon subcomponent functions as a carbon monoxide dehydrogenase. The precise role of the epsilon subunit is unclear; it may have a stabilizing role within the alpha(2)epsilon(2) component and/or be involved in electron transfer to FAD during a potential FAD-mediated CO oxidation. This is Acetyl-CoA decarbonylase/synthase complex subunit epsilon 1 (cdhB1) from Methanosarcina mazei (strain ATCC BAA-159 / DSM 3647 / Goe1 / Go1 / JCM 11833 / OCM 88) (Methanosarcina frisia).